Reading from the N-terminus, the 1146-residue chain is MEEEQLRYSRRLRHTLRRRYEDDGISDDEIEGKRTFDLEEKLRSSKYNSNFITYMEGKDFNMKFIQEGGLRDPIIFTKSEGLGIKMPDPNFSVNDVKMFVGSRRVVDVMDVGTQKGIEMTMAQWAKYYETPEEEREKLYNVISLEFSHTKLENLVQRPTTVDQIDWVDNIWPRHLKDRQTESTNVIQEMQYPKVQKYCLMSVRGCYTDFHVDFGGTSVWYHILRGGKVFWLIPPTDQNLELYENWLLSGKQGDVFLGDRVTECQRIELKQGYTFVIPSGWIHAVYTPQDTLVFGGNFLHSFNIPMQLRIYSIEDRTRVPTKFRYPFYYEMCWYVLERYVYCMMRRSHLTKEFQRESLSIDLELNGRQRPDTPSSSSSSSSSGLSSSSDNDDSSDQDWEEEEGLRKRERDRCRVERELQRKRNRDRQQRDQERDRHGRTERIIIHTLPASLRPLTPPPSLPLPTPDSPPSTSPFLTWFEVEGLRCLVLKLESLPPLKKCLPDGIHDPEALIFDIKRLLEDHAHDPPELALTGVPIIQWPKRSQYKVHLRPKIQFTKPHTMRPASRHSTAPPRTSGTPSGTTASSGARRRRVRCRKCQACVQRECGTCHYCKDMKKFGGPGRMKQSCVLRQCLAPRLPHSVTCALCGEVDQTNDTQDFERKLMECSVCNEIVHPGCLEMDGEGLLSDELPNYWECPKCYEGQKHTVEANHDRILLHSKRKAADNYESSHYYPAKVLRPPLGQSPPSPPLLLLPPSPSSAPPTPPSAQTQVPLASREERAKRRQLAREKENHPTGCDQSEGDRLRLRGPYLTVTLQRPPKELSSTSIVPKLQAITPNPRQPIRAAPLHQDEEREEEEEEEEEEEETENVMLGQRKDSTSMQKDVWLSVFHYLTHEELCICMRVCKAWYKWGCDKRLWSRIDVSRCKSLVPQALSGIIKRQPIYLDLSWTNVSKKQLIWLINRLPGLKDLILAGCTWSAVSALASCSCPLLRTLDLRWTVGIKDTQIRDLLTPASDKSGHDSRSKLRLLTDLRLSGLDISDVTLRLIIRHCPLLSKLDLSHCPLLSDQSVNLLTAVGSSTRGTLTHIHLAGCKGVTDESLLYLRRATNLSLIDLHGCKQVTRGACEEFISDLSVSTLYCLSDDKLIQRIS.

One can recognise a JmjC domain in the interval 146–314 (FSHTKLENLV…MQLRIYSIED (169 aa)). Substrate is bound at residue Thr207. Fe cation contacts are provided by His210 and Asp212. A substrate-binding site is contributed by Lys227. A Fe cation-binding site is contributed by His282. Disordered regions lie at residues 363–467 (LNGR…PDSP) and 554–585 (TKPHTMRPASRHSTAPPRTSGTPSGTTASSGA). Over residues 373–387 (SSSSSSSSSGLSSSS) the composition is skewed to low complexity. Residues 388 to 401 (DNDDSSDQDWEEEE) show a composition bias toward acidic residues. Basic and acidic residues predominate over residues 402–442 (GLRKRERDRCRVERELQRKRNRDRQQRDQERDRHGRTERII). Over residues 453-467 (LTPPPSLPLPTPDSP) the composition is skewed to pro residues. Residues 566 to 584 (STAPPRTSGTPSGTTASSG) show a composition bias toward low complexity. A CXXC-type zinc finger spans residues 585 to 631 (ARRRRVRCRKCQACVQRECGTCHYCKDMKKFGGPGRMKQSCVLRQCL). Positions 592, 595, 598, 603, 606, 609, 625, and 630 each coordinate Zn(2+). Residues 638–699 (SVTCALCGEV…YWECPKCYEG (62 aa)) form a PHD-type zinc finger. Disordered stretches follow at residues 733–800 (VLRP…EGDR) and 832–867 (TPNPRQPIRAAPLHQDEEREEEEEEEEEEEETENVM). The span at 739-762 (GQSPPSPPLLLLPPSPSSAPPTPP) shows a compositional bias: pro residues. Basic and acidic residues predominate over residues 772–789 (SREERAKRRQLAREKENH). The segment covering 849–864 (EREEEEEEEEEEEETE) has biased composition (acidic residues). Residues 874–919 (STSMQKDVWLSVFHYLTHEELCICMRVCKAWYKWGCDKRLWSRIDV) enclose the F-box domain. 6 LRR repeats span residues 945-966 (WTNVSKKQLIWLINRLPGLKDL), 968-994 (LAGCTWSAVSALASCSCPLLRTLDLRW), 1032-1057 (GLDISDVTLRLIIRHCPLLSKLDLSH), 1058-1087 (CPLLSDQSVNLLTAVGSSTRGTLTHIHLAG), 1088-1112 (CKGVTDESLLYLRRATNLSLIDLHG), and 1113-1138 (CKQVTRGACEEFISDLSVSTLYCLSD).

The protein belongs to the JHDM1 histone demethylase family. The cofactor is Fe(2+).

The protein resides in the nucleus. Its subcellular location is the nucleoplasm. The enzyme catalyses N(6),N(6)-dimethyl-L-lysyl(36)-[histone H3] + 2 2-oxoglutarate + 2 O2 = L-lysyl(36)-[histone H3] + 2 formaldehyde + 2 succinate + 2 CO2. Histone demethylase that specifically demethylates 'Lys-36' of histone H3, thereby playing a central role in histone code. Preferentially demethylates dimethylated H3 'Lys-36' residue while it has weak or no activity for mono- and tri-methylated H3 'Lys-36'. May also recognize and bind to some phosphorylated proteins and promote their ubiquitination and degradation. Required to maintain the heterochromatic state. Associates with centromeres and represses transcription of small non-coding RNAs that are encoded by the clusters of satellite repeats at the centromere. Required to sustain centromeric integrity and genomic stability, particularly during mitosis. May play a role in the regulation of circadian gene expression. This chain is Lysine-specific demethylase 2A (kdm2a), found in Xenopus tropicalis (Western clawed frog).